We begin with the raw amino-acid sequence, 400 residues long: uncharacterized protein (400 aa).

Residues 1 to 23 form the signal peptide; that stretch reads MSRKLLLALTFLVVLGIAVVVMA.

This is an uncharacterized protein from Archaeoglobus fulgidus (strain ATCC 49558 / DSM 4304 / JCM 9628 / NBRC 100126 / VC-16).